We begin with the raw amino-acid sequence, 348 residues long: Dihydroorotase (348 aa).

Zn(2+) contacts are provided by His14 and His16. Residues 16 to 18 and Asn42 each bind substrate; that span reads HLR. 3 residues coordinate Zn(2+): Lys100, His137, and His175. Lys100 is modified (N6-carboxylysine). Residue His137 participates in substrate binding. Position 220 (Leu220) interacts with substrate. Asp248 contributes to the Zn(2+) binding site. The active site involves Asp248. Residues His252 and Ala264 each coordinate substrate.

This sequence belongs to the metallo-dependent hydrolases superfamily. DHOase family. Class II DHOase subfamily. In terms of assembly, homodimer. Zn(2+) serves as cofactor.

The enzyme catalyses (S)-dihydroorotate + H2O = N-carbamoyl-L-aspartate + H(+). Its pathway is pyrimidine metabolism; UMP biosynthesis via de novo pathway; (S)-dihydroorotate from bicarbonate: step 3/3. In terms of biological role, catalyzes the reversible cyclization of carbamoyl aspartate to dihydroorotate. This is Dihydroorotase from Pseudomonas fluorescens (strain ATCC BAA-477 / NRRL B-23932 / Pf-5).